The primary structure comprises 20 residues: Pregnancy-associated glycoprotein 55h (20 aa).

N-linked (GlcNAc...) asparagine glycosylation is present at asparagine 4.

Belongs to the peptidase A1 family. In terms of tissue distribution, highly expressed in the placenta between day 60 and day 100 of gestation.

The protein resides in the secreted. It is found in the extracellular space. The sequence is that of Pregnancy-associated glycoprotein 55h from Ovis aries (Sheep).